A 359-amino-acid polypeptide reads, in one-letter code: Tryptophan 2,3-dioxygenase (359 aa).

Residues 38 to 42 (FIIVH) and Arg-109 each bind substrate. Heme is bound at residue His-295. Thr-309 contacts substrate.

The protein belongs to the tryptophan 2,3-dioxygenase family. As to quaternary structure, homotetramer. Heme serves as cofactor.

The enzyme catalyses L-tryptophan + O2 = N-formyl-L-kynurenine. The protein operates within amino-acid degradation; L-tryptophan degradation via kynurenine pathway; L-kynurenine from L-tryptophan: step 1/2. Its function is as follows. Heme-dependent dioxygenase that catalyzes the oxidative cleavage of the L-tryptophan (L-Trp) pyrrole ring and converts L-tryptophan to N-formyl-L-kynurenine. Catalyzes the oxidative cleavage of the indole moiety. The polypeptide is Tryptophan 2,3-dioxygenase (Bdellovibrio bacteriovorus (strain ATCC 15356 / DSM 50701 / NCIMB 9529 / HD100)).